A 213-amino-acid chain; its full sequence is Regulatory protein RecX (213 aa).

It belongs to the RecX family.

It is found in the cytoplasm. In terms of biological role, modulates RecA activity. The chain is Regulatory protein RecX from Clostridium beijerinckii (strain ATCC 51743 / NCIMB 8052) (Clostridium acetobutylicum).